The following is a 99-amino-acid chain: uncharacterized protein (99 aa).

A helical membrane pass occupies residues 74–90; sequence FLSLPLGHSYLFLFCFW.

Its subcellular location is the membrane. This is an uncharacterized protein from Saccharomyces cerevisiae (strain ATCC 204508 / S288c) (Baker's yeast).